The sequence spans 191 residues: Protein Ves (191 aa).

Belongs to the Ves family.

The chain is Protein Ves from Shigella flexneri.